Consider the following 61-residue polypeptide: uncharacterized protein (61 aa).

It is found in the mitochondrion. This is an uncharacterized protein from Marchantia polymorpha (Common liverwort).